The chain runs to 396 residues: Diphosphomevalonate decarboxylase (396 aa).

Residues 19-22 (YWGK), R74, 153-158 (SGSACR), and T209 each bind (R)-5-diphosphomevalonate.

The protein belongs to the diphosphomevalonate decarboxylase family. Homodimer.

It catalyses the reaction (R)-5-diphosphomevalonate + ATP = isopentenyl diphosphate + ADP + phosphate + CO2. It functions in the pathway isoprenoid biosynthesis; isopentenyl diphosphate biosynthesis via mevalonate pathway; isopentenyl diphosphate from (R)-mevalonate: step 3/3. Its function is as follows. Diphosphomevalonate decarboxylase; part of the second module of ergosterol biosynthesis pathway that includes the middle steps of the pathway. MVD1/ERG19 converts diphosphomevalonate into isopentenyl diphosphate. The second module is carried out in the vacuole and involves the formation of farnesyl diphosphate, which is also an important intermediate in the biosynthesis of ubiquinone, dolichol, heme and prenylated proteins. Activity by the mevalonate kinase ERG12 first converts mevalonate into 5-phosphomevalonate. 5-phosphomevalonate is then further converted to 5-diphosphomevalonate by the phosphomevalonate kinase ERG8. The diphosphomevalonate decarboxylase MVD1/ERG19 then produces isopentenyl diphosphate. The isopentenyl-diphosphate delta-isomerase IDI1 then catalyzes the 1,3-allylic rearrangement of the homoallylic substrate isopentenyl (IPP) to its highly electrophilic allylic isomer, dimethylallyl diphosphate (DMAPP). Finally the farnesyl diphosphate synthase ERG20 catalyzes the sequential condensation of isopentenyl pyrophosphate with dimethylallyl pyrophosphate, and then with the resultant geranylpyrophosphate to the ultimate product farnesyl pyrophosphate. This chain is Diphosphomevalonate decarboxylase, found in Saccharomyces cerevisiae (strain ATCC 204508 / S288c) (Baker's yeast).